A 156-amino-acid polypeptide reads, in one-letter code: Protein-export protein SecB (156 aa).

This sequence belongs to the SecB family. In terms of assembly, homotetramer, a dimer of dimers. One homotetramer interacts with 1 SecA dimer.

The protein localises to the cytoplasm. One of the proteins required for the normal export of preproteins out of the cell cytoplasm. It is a molecular chaperone that binds to a subset of precursor proteins, maintaining them in a translocation-competent state. It also specifically binds to its receptor SecA. The sequence is that of Protein-export protein SecB from Paraburkholderia phymatum (strain DSM 17167 / CIP 108236 / LMG 21445 / STM815) (Burkholderia phymatum).